Consider the following 136-residue polypeptide: Autophagy-related protein 41 (136 aa).

Residues 127–136 form an ATG9-binding region; that stretch reads QNYRLWLSSV.

In terms of assembly, interacts with ATG9.

It is found in the preautophagosomal structure membrane. Functionally, involved in both selective and non-selective autophagy. Does not appear to play a role in determining the size of autophagosomes, but rather influences their formation rate. With ATG9, plays a role in the delivery of donor membrane to expanding phagophore. The polypeptide is Autophagy-related protein 41 (Saccharomyces cerevisiae (strain ATCC 204508 / S288c) (Baker's yeast)).